Reading from the N-terminus, the 1175-residue chain is Potassium/sodium hyperpolarization-activated cyclic nucleotide-gated channel 4 (1175 aa).

Residues 1-259 lie on the Cytoplasmic side of the membrane; the sequence is MDKLPPSMRK…SAGFWIIHPY (259 aa). Positions 17–186 are disordered; sequence QQVGAKAWIM…SSCGEQRPAD (170 aa). Residues 26-36 are compositionally biased toward acidic residues; sequence MDEEEDAEEEG. The span at 60–75 shows a compositional bias: low complexity; the sequence is PSAAAAAAGGAESRGA. Gly residues predominate over residues 111–126; sequence SRGGGGGGGSTGGGSH. Residues 128–140 are compositionally biased toward basic and acidic residues; the sequence is HLHDSAEERRLIA. Ser-145 bears the Phosphoserine mark. A compositionally biased stretch (pro residues) spans 162-175; the sequence is PGAPAPPAASPPQV. Residues 260 to 288 traverse the membrane as a helical segment; the sequence is SDFRFYWDLTMLLLMVGNLIIIPVGITFF. The Extracellular segment spans residues 289–292; sequence KDEN. Residues 293-316 form a helical membrane-spanning segment; the sequence is TTPWIVFNVVSDTFFLIDLVLNFR. At 317 to 329 the chain is on the cytoplasmic side; that stretch reads TGIVVEDNTDIIL. The chain crosses the membrane as a helical span at residues 330 to 352; it reads DPRRIKMKYLKSWFVVDFVSSIP. At 353-374 the chain is on the extracellular side; that stretch reads VDYIFLIVETRIDSEVYKTARA. The chain crosses the membrane as a helical; Voltage-sensor span at residues 375-410; sequence LRIVRFTKILSLLRLLRLSRLIRYIHQWEEIFHMTY. The Cytoplasmic portion of the chain corresponds to 411–413; sequence DLA. A helical membrane pass occupies residues 414–444; sequence SAVVRIVNLIGMMLLLCHWDGCLQFLVPMLQ. Residues 445 to 449 are Extracellular-facing; the sequence is DFPDD. Residues 450-478 constitute an intramembrane region (pore-forming); that stretch reads CWVSLNNMVNNSWGKQYSYALFKAMSHML. The Extracellular segment spans residues 479 to 488; that stretch reads CIGYGRQAPM. Residues 489-521 form a helical membrane-spanning segment; it reads GMSDVWLTMLSMIVGATCYAMFIGHATALIQSL. Topologically, residues 522 to 1175 are cytoplasmic; it reads DSSRRQYQEK…PVRSKLPSNL (654 aa). 3',5'-cyclic GMP is bound by residues Tyr-560, Lys-563, Phe-565, and Glu-567. 3',5'-cyclic AMP-binding residues include Gly-660, Glu-661, Cys-663, Arg-670, Thr-671, Val-674, and Arg-711. Disordered regions lie at residues 801-820 and 830-1175; these read AIFR…AGQT and LAPS…PSNL. Low complexity-rich tracts occupy residues 839-854, 900-912, 948-966, and 984-1004; these read SPAS…SSAS, LGGS…SPLL, SPTS…LSPG, and RLPF…SPRG. Positions 1038–1050 are enriched in pro residues; the sequence is ASSPPPPPPPPAP. 2 positions are modified to phosphoserine: Ser-1089 and Ser-1093. A compositionally biased stretch (pro residues) spans 1102–1114; that stretch reads PPFPRAPGRPPGA.

Belongs to the potassium channel HCN family. In terms of assembly, homotetramer. The channel is composed of a homo- or heterotetrameric complex of pore-forming subunits. Interacts with PEX5L with a 4:4 HCN4:PEX5L stoichiometry; reduces the effects of cAMP on the voltage-dependence and rate of activation. Interacts with IRAG1; regulates HCN4 channel activity. Interacts with IRAG2; regulates HCN4 channel activity. S-palmitoylated. In terms of tissue distribution, highly expressed in the heart sinoatrial node (SAN). Not detected in atrium, ventricle, forebrain or cerebellum. Detected at very low levels in total brain.

The protein resides in the cell membrane. It carries out the reaction K(+)(in) = K(+)(out). The enzyme catalyses Na(+)(in) = Na(+)(out). Its activity is regulated as follows. Activated by cAMP and to a lesser extent by cGMP and cCMP. cAMP binding causes a conformation change that leads to the assembly of an active tetramer and channel opening by shifting the voltage-dependency towards more positive voltages. Binding of cAMP removes a tonic inhibition conferred by cyclic nucleotide-binding domain (CNBD) on channel opening. Cyclic dinucleotides can modulate HCN4 channel; cyclic dinucleotides acting as potent antagonists of cAMP. Inhibited by extracellular Cs(+) ions. Auxiliary subunits can also regulate HCN4 channel. IRAG1 causes a gain-of-function by shifting HCN4 activation to more depolarized membrane potentials in the absence of cAMP. In contrast, IRAG2 causes a loss-of-function by inhibiting cAMP-dependent potentiation of HCN4 activation. Its function is as follows. Hyperpolarization-activated ion channel that are permeable to Na(+) and K(+) ions with very slow activation and inactivation. Exhibits higher selectivity for K(+) over Na(+) ions. Contributes to the native pacemaker currents in heart (If) that regulate the rhythm of heart beat. Contributes to the native pacemaker currents in neurons (Ih). May mediate responses to sour stimuli. This Oryctolagus cuniculus (Rabbit) protein is Potassium/sodium hyperpolarization-activated cyclic nucleotide-gated channel 4 (HCN4).